The sequence spans 860 residues: Nuclear cap-binding protein complex subunit 1 (860 aa).

Residues 36–271 (CKDMLPDIRT…SNVKNALAND (236 aa)) form the MIF4G domain.

Belongs to the NCBP1 family. In terms of assembly, component of the nuclear cap-binding complex (CBC).

Its subcellular location is the nucleus. Its function is as follows. Component of the cap-binding complex (CBC) involved in the nuclear export of capped U snRNAs. The CBC complex is required for efficient pre-mRNA splicing through efficient commitment complex and spliceosome formation; and involved in rRNA processing at sites A0, A1 and A2. The chain is Nuclear cap-binding protein complex subunit 1 (CBC1) from Eremothecium gossypii (strain ATCC 10895 / CBS 109.51 / FGSC 9923 / NRRL Y-1056) (Yeast).